Here is a 309-residue protein sequence, read N- to C-terminus: THAP domain-containing protein 7 (309 aa).

Residues 1–93 form a THAP-type zinc finger; that stretch reads MPRHCSAAGC…LKEGAVPTIF (93 aa). The segment at 158-209 is disordered; it reads TLPASPAGRLEPGLSSPFSDLLGPLGAQADEAGCSAQPSPERQPSPLEPRPV. Phosphoserine is present on Ser-162. The segment covering 198 to 209 has biased composition (pro residues); the sequence is ERQPSPLEPRPV. Ser-210 bears the Phosphoserine mark. Residues 229–232 carry the HCFC1-binding motif (HBM) motif; that stretch reads EHSY.

In terms of assembly, forms homodimers. Interacts with HDAC3 and nuclear hormone receptor corepressors. Interacts via HBM with HCFC1.

Its subcellular location is the nucleus. It localises to the chromosome. Functionally, chromatin-associated, histone tail-binding protein that represses transcription via recruitment of HDAC3 and nuclear hormone receptor corepressors. The sequence is that of THAP domain-containing protein 7 (THAP7) from Homo sapiens (Human).